A 293-amino-acid polypeptide reads, in one-letter code: Protein translocase subunit SecF (293 aa).

6 consecutive transmembrane segments (helical) span residues 10-30, 130-150, 158-178, 185-205, 244-264, and 267-287; these read ARIFFSITAVVLIVGIVSMFA, VKSAVGAVVLSWVLMIIYITI, LAAIVALIIDVMVTLTWFSVL, SFVAALLTVVGYSVNGTIVVF, LFAVVAIFLFGGETIHNFSFA, and VGFCSGFYTSTFLAGSMWLFF.

This sequence belongs to the SecD/SecF family. SecF subfamily. In terms of assembly, forms a complex with SecD. Part of the essential Sec protein translocation apparatus which comprises SecA, SecYEG and auxiliary proteins SecDF. Other proteins may also be involved.

It localises to the cell membrane. In terms of biological role, part of the Sec protein translocase complex. Interacts with the SecYEG preprotein conducting channel. SecDF uses the proton motive force (PMF) to complete protein translocation after the ATP-dependent function of SecA. This Acidaminococcus fermentans (strain ATCC 25085 / DSM 20731 / CCUG 9996 / CIP 106432 / VR4) protein is Protein translocase subunit SecF.